The chain runs to 261 residues: Thiazole synthase (261 aa).

Lysine 97 functions as the Schiff-base intermediate with DXP in the catalytic mechanism. 1-deoxy-D-xylulose 5-phosphate contacts are provided by residues glycine 158, alanine 184 to glycine 185, and alanine 206 to serine 207.

It belongs to the ThiG family. As to quaternary structure, homotetramer. Forms heterodimers with either ThiH or ThiS.

It localises to the cytoplasm. The catalysed reaction is [ThiS sulfur-carrier protein]-C-terminal-Gly-aminoethanethioate + 2-iminoacetate + 1-deoxy-D-xylulose 5-phosphate = [ThiS sulfur-carrier protein]-C-terminal Gly-Gly + 2-[(2R,5Z)-2-carboxy-4-methylthiazol-5(2H)-ylidene]ethyl phosphate + 2 H2O + H(+). It participates in cofactor biosynthesis; thiamine diphosphate biosynthesis. In terms of biological role, catalyzes the rearrangement of 1-deoxy-D-xylulose 5-phosphate (DXP) to produce the thiazole phosphate moiety of thiamine. Sulfur is provided by the thiocarboxylate moiety of the carrier protein ThiS. In vitro, sulfur can be provided by H(2)S. This chain is Thiazole synthase, found in Corynebacterium diphtheriae (strain ATCC 700971 / NCTC 13129 / Biotype gravis).